The primary structure comprises 134 residues: Small ribosomal subunit protein bS6 (134 aa).

The tract at residues 99-134 is disordered; the sequence is EPSAMMQKRDRDERKDRERGRRRDDDGYVGERNEEG. Residues 105–134 are compositionally biased toward basic and acidic residues; it reads QKRDRDERKDRERGRRRDDDGYVGERNEEG.

Belongs to the bacterial ribosomal protein bS6 family.

In terms of biological role, binds together with bS18 to 16S ribosomal RNA. This chain is Small ribosomal subunit protein bS6, found in Methylobacterium sp. (strain 4-46).